The chain runs to 356 residues: Dynein axonemal heavy chain 12 (356 aa).

6 ANK repeats span residues 17 to 46, 50 to 81, 82 to 111, 124 to 153, 154 to 183, and 185 to 218; these read DSSS…DANV, SGHL…AIKR, SGIS…DVNF, HRKS…MPNQ, DPVN…NVNY, and CRVN…DTEL. One can recognise an SOCS box domain in the interval 290 to 345; it reads WSEIHFILTNPRSLKHLCRLKIRKCMGRLRLRCPVFMSFLPLPSRLKAYVLYKEYD.

It belongs to the dynein heavy chain family. Consists of at least two heavy chains and a number of intermediate and light chains.

The protein resides in the cytoplasm. Its subcellular location is the cytoskeleton. It is found in the cilium axoneme. Its pathway is protein modification; protein ubiquitination. Force generating protein of respiratory cilia. Produces force towards the minus ends of microtubules. Dynein has ATPase activity; the force-producing power stroke is thought to occur on release of ADP. Involved in sperm motility; implicated in sperm flagellar assembly. Its function is as follows. May be a substrate-recognition component of a SCF-like ECS (Elongin-Cullin-SOCS-box protein) E3 ubiquitin-protein ligase complex which mediates the ubiquitination and subsequent proteasomal degradation of target proteins. The polypeptide is Dynein axonemal heavy chain 12 (DNAH12) (Bos taurus (Bovine)).